The following is a 554-amino-acid chain: CTP synthase (554 aa).

An amidoligase domain region spans residues 1-270 (MTKFVFVTGG…DGLICDKLRL (270 aa)). Residue Ser13 coordinates CTP. Ser13 contacts UTP. ATP-binding positions include 14–19 (SLGKGI) and Asp71. Mg(2+)-binding residues include Asp71 and Glu144. Residues 151 to 153 (DIE), 191 to 196 (KTKPTQ), and Lys227 each bind CTP. UTP is bound by residues 191–196 (KTKPTQ) and Lys227. The 254-residue stretch at 295–548 (TVAMVGKYVD…IAAAKARHQA (254 aa)) folds into the Glutamine amidotransferase type-1 domain. Residue Gly357 participates in L-glutamine binding. The active-site Nucleophile; for glutamine hydrolysis is Cys384. L-glutamine-binding positions include 385–388 (LGMQ), Glu408, and Arg474. Catalysis depends on residues His521 and Glu523.

It belongs to the CTP synthase family. In terms of assembly, homotetramer.

It catalyses the reaction UTP + L-glutamine + ATP + H2O = CTP + L-glutamate + ADP + phosphate + 2 H(+). It carries out the reaction L-glutamine + H2O = L-glutamate + NH4(+). The enzyme catalyses UTP + NH4(+) + ATP = CTP + ADP + phosphate + 2 H(+). The protein operates within pyrimidine metabolism; CTP biosynthesis via de novo pathway; CTP from UDP: step 2/2. With respect to regulation, allosterically activated by GTP, when glutamine is the substrate; GTP has no effect on the reaction when ammonia is the substrate. The allosteric effector GTP functions by stabilizing the protein conformation that binds the tetrahedral intermediate(s) formed during glutamine hydrolysis. Inhibited by the product CTP, via allosteric rather than competitive inhibition. Catalyzes the ATP-dependent amination of UTP to CTP with either L-glutamine or ammonia as the source of nitrogen. Regulates intracellular CTP levels through interactions with the four ribonucleotide triphosphates. This is CTP synthase from Verminephrobacter eiseniae (strain EF01-2).